A 163-amino-acid polypeptide reads, in one-letter code: Ribosome maturation factor RimP (163 aa).

A disordered region spans residues 66 to 85 (ALDRDDPVPGPPYELEVSSP).

This sequence belongs to the RimP family.

It is found in the cytoplasm. In terms of biological role, required for maturation of 30S ribosomal subunits. The polypeptide is Ribosome maturation factor RimP (Kocuria rhizophila (strain ATCC 9341 / DSM 348 / NBRC 103217 / DC2201)).